Here is a 208-residue protein sequence, read N- to C-terminus: Protein-L-isoaspartate O-methyltransferase (208 aa).

The active site involves Ser-59.

Belongs to the methyltransferase superfamily. L-isoaspartyl/D-aspartyl protein methyltransferase family.

The protein resides in the cytoplasm. It carries out the reaction [protein]-L-isoaspartate + S-adenosyl-L-methionine = [protein]-L-isoaspartate alpha-methyl ester + S-adenosyl-L-homocysteine. Functionally, catalyzes the methyl esterification of L-isoaspartyl residues in peptides and proteins that result from spontaneous decomposition of normal L-aspartyl and L-asparaginyl residues. It plays a role in the repair and/or degradation of damaged proteins. The sequence is that of Protein-L-isoaspartate O-methyltransferase from Yersinia pseudotuberculosis serotype O:1b (strain IP 31758).